The primary structure comprises 27 residues: Nemertide alpha-8 (27 aa).

3 disulfide bridges follow: C2–C16, C9–C20, and C15–C26.

This sequence belongs to the nemertide family. Confined to the epidermis and to the mucus layer.

It is found in the secreted. Highly potent toxin against both insect and some mammalian sodium channels (Nav). It potently inhibits inactivation of insect sodium channels of B.germanica (BgNav1) and also delays the inactivation of mammalian Nav with potent activity on Nav1.3/SCN3A and Nav1.4/SCN4A. 1 uM is enough to completely inhibits the inactivation, resulting in sustained non-inactivating currents. In addition, the toxin significantly enhances the recovery from inactivation, and the open state is not required for the toxin to interact with the channel. In vivo, injection into brine shrimp (Artemia salina) stops movement or causes death after 24 hours (EC(50)=0.4 uM). The protein is Nemertide alpha-8 of Riseriellus occultus (Ribbon worm).